Reading from the N-terminus, the 543-residue chain is Keratin, type II cytoskeletal 75 (543 aa).

Residues 1-16 show a composition bias toward polar residues; it reads MSRQSTITFQTSSRRG. Residues 1 to 48 are disordered; that stretch reads MSRQSTITFQTSSRRGFSTASATTPATSRSRFSSASVTHSPAGSGGLG. The head stretch occupies residues 1-144; that stretch reads MSRQSTITFQ…DPNIQRVRKE (144 aa). The segment covering 17–36 has biased composition (low complexity); that stretch reads FSTASATTPATSRSRFSSAS. Positions 145–180 are coil 1A; the sequence is EREQIKTLNNKFASFIDKVRFLEQQNKVLETKWSLL. The region spanning 145–458 is the IF rod domain; the sequence is EREQIKTLNN…KLLEGEECRL (314 aa). Residues 181-199 are linker 1; it reads QEQGTRTVRQSLEPFFEAY. Residues 200–292 form a coil 1B region; it reads ITDLRRQLDS…LFEAELCQMQ (93 aa). Positions 293–315 are linker 12; that stretch reads TRVSDTSVVLSMDNNRSLDLDSI. The segment at 316–454 is coil 2; that stretch reads IAEVKAQYEE…ATYRKLLEGE (139 aa). A tail region spans residues 455 to 543; that stretch reads ECRLSGEGVS…TSSSRKSYKH (89 aa). The tract at residues 511–543 is disordered; the sequence is SSFSNSSSRGLGGSGSSFKFVSTTSSSRKSYKH. Residues 526-543 are compositionally biased toward low complexity; that stretch reads SSFKFVSTTSSSRKSYKH.

It belongs to the intermediate filament family. Heterodimer of a type I and a type II keratin. May associate with KRT17.

Functionally, plays a central role in hair and nail formation. Essential component of keratin intermediate filaments in the companion layer of the hair follicle. The polypeptide is Keratin, type II cytoskeletal 75 (KRT75) (Bos taurus (Bovine)).